Consider the following 952-residue polypeptide: Substrate-adhesion molecule (952 aa).

The N-terminal stretch at 1–25 is a signal peptide; it reads MKSQKIGSMILLIGILLAIFNFAYS. The Extracellular portion of the chain corresponds to 26-527; it reads DDDIERFSIN…TWFFDTNVET (502 aa). Asparagine 78, asparagine 182, asparagine 231, asparagine 243, and asparagine 412 each carry an N-linked (GlcNAc...) asparagine glycan. The EGF-like domain occupies 438-471; sequence EIRRCKDSCNGYGTCNTANYTCVCDSAHMGETCN. 3 disulfide bridges follow: cysteine 442–cysteine 452, cysteine 446–cysteine 459, and cysteine 461–cysteine 470. Asparagine 456 is a glycosylation site (N-linked (GlcNAc...) asparagine). The chain crosses the membrane as a helical span at residues 528 to 548; it reads GVIALACIFIAFVGILYIIDI. At 549–591 the chain is on the cytoplasmic side; that stretch reads GTTVPIDIKRAKDYAEENKSGQFPKATHEEASVLWWRDQRSHK. A helical membrane pass occupies residues 592–612; that stretch reads AWTFMDQFQLISLVSHIGVVF. At 613–678 the chain is on the extracellular side; it reads PSRFISFTEY…GDLYLLPNIL (66 aa). A helical transmembrane segment spans residues 679–699; it reads FWFGLLLGVFLVPLLLAYAII. Over 700–722 the chain is Cytoplasmic; the sequence is SFMESLIHWKEVVTNRLIHVLVR. The chain crosses the membrane as a helical span at residues 723 to 743; it reads ILTFGYIGVLIAASFAMVTPL. Over 744–752 the chain is Extracellular; the sequence is HDYRIIIPG. The chain crosses the membrane as a helical span at residues 753 to 773; it reads AIIFVLYGIGLPIAIWFLLAV. The Cytoplasmic portion of the chain corresponds to 774 to 801; it reads PEARLHNPTFKQRFGCLYVHYKPKTDHR. The chain crosses the membrane as a helical span at residues 802-822; sequence FVVFMFIKRFIMAVIIGILSF. The Extracellular segment spans residues 823 to 837; it reads KPMTNYPLTGTDLAV. The helical transmembrane segment at 838 to 858 threads the bilayer; the sequence is PIVQVVVIDIALIGYAVLLFI. Topologically, residues 859 to 868 are cytoplasmic; it reads RKPYFDHYQL. Residues 869 to 889 form a helical membrane-spanning segment; that stretch reads WLEYLLTAINIVTVSLSLTHI. Over 890–897 the chain is Extracellular; it reads KSPSAAGE. Residues 898-918 form a helical membrane-spanning segment; sequence LIACLIQALALVACIAAYVVA. Topologically, residues 919–952 are cytoplasmic; that stretch reads WLQMRSSFIKKVKKYLCCCCKSSKSSGEIDLSKK.

The protein resides in the cell membrane. Functionally, involved in substrate adhesion, myosin-independent cytokinesis, organization of actin cytoskeleton, and phagocytosis. The sequence is that of Substrate-adhesion molecule (sadA) from Dictyostelium discoideum (Social amoeba).